The chain runs to 64 residues: Photosystem II reaction center protein J (64 aa).

A helical membrane pass occupies residues 35–55; that stretch reads LWLVATAGGIAVIFVLGIFFY.

Belongs to the PsbJ family. As to quaternary structure, PSII is composed of 1 copy each of membrane proteins PsbA, PsbB, PsbC, PsbD, PsbE, PsbF, PsbH, PsbI, PsbJ, PsbK, PsbL, PsbM, PsbT, PsbX, PsbY, Psb30/Ycf12, peripheral proteins PsbO, CyanoQ (PsbQ), PsbU, PsbV and a large number of cofactors. It forms dimeric complexes.

It is found in the cellular thylakoid membrane. Its function is as follows. One of the components of the core complex of photosystem II (PSII). PSII is a light-driven water:plastoquinone oxidoreductase that uses light energy to abstract electrons from H(2)O, generating O(2) and a proton gradient subsequently used for ATP formation. It consists of a core antenna complex that captures photons, and an electron transfer chain that converts photonic excitation into a charge separation. This chain is Photosystem II reaction center protein J, found in Prochlorococcus marinus (strain MIT 9515).